Here is a 64-residue protein sequence, read N- to C-terminus: Translational regulator CsrA (64 aa).

It belongs to the CsrA/RsmA family. In terms of assembly, homodimer; the beta-strands of each monomer intercalate to form a hydrophobic core, while the alpha-helices form wings that extend away from the core.

It localises to the cytoplasm. Its function is as follows. A key translational regulator that binds mRNA to regulate translation initiation and/or mRNA stability. Mediates global changes in gene expression, shifting from rapid growth to stress survival by linking envelope stress, the stringent response and the catabolite repression systems. Usually binds in the 5'-UTR; binding at or near the Shine-Dalgarno sequence prevents ribosome-binding, repressing translation, binding elsewhere in the 5'-UTR can activate translation and/or stabilize the mRNA. Its function is antagonized by small RNA(s). The chain is Translational regulator CsrA from Dichelobacter nodosus (strain VCS1703A).